Consider the following 377-residue polypeptide: N-acetyldiaminopimelate deacetylase (377 aa).

The active site involves D69. The Proton acceptor role is filled by E128.

It belongs to the peptidase M20A family. N-acetyldiaminopimelate deacetylase subfamily.

The enzyme catalyses N-acetyl-(2S,6S)-2,6-diaminopimelate + H2O = (2S,6S)-2,6-diaminopimelate + acetate. Its pathway is amino-acid biosynthesis; L-lysine biosynthesis via DAP pathway; LL-2,6-diaminopimelate from (S)-tetrahydrodipicolinate (acetylase route): step 3/3. Its function is as follows. Catalyzes the conversion of N-acetyl-diaminopimelate to diaminopimelate and acetate. This chain is N-acetyldiaminopimelate deacetylase, found in Brevibacillus brevis (strain 47 / JCM 6285 / NBRC 100599).